The primary structure comprises 394 residues: Argininosuccinate synthase (394 aa).

Residues 7–15 (AYSGGLDTS) and A34 contribute to the ATP site. Positions 85 and 90 each coordinate L-citrulline. Position 115 (G115) interacts with ATP. L-aspartate is bound by residues T117, N121, and D122. L-citrulline is bound at residue N121. The L-citrulline site is built by R125, S176, S185, E261, and Y273.

Belongs to the argininosuccinate synthase family. Type 1 subfamily. In terms of assembly, homotetramer.

The protein localises to the cytoplasm. It carries out the reaction L-citrulline + L-aspartate + ATP = 2-(N(omega)-L-arginino)succinate + AMP + diphosphate + H(+). It functions in the pathway amino-acid biosynthesis; L-arginine biosynthesis; L-arginine from L-ornithine and carbamoyl phosphate: step 2/3. The sequence is that of Argininosuccinate synthase from Ehrlichia ruminantium (strain Gardel).